The primary structure comprises 392 residues: Outer membrane protein assembly factor BamB (392 aa).

Positions 1–19 are cleaved as a signal peptide; the sequence is MQLRKLLLPGLLSVTLLSG. A lipid anchor (N-palmitoyl cysteine) is attached at C20. C20 carries the S-diacylglycerol cysteine lipid modification.

It belongs to the BamB family. Part of the Bam complex, which is composed of the outer membrane protein BamA, and four lipoproteins BamB, BamC, BamD and BamE.

It localises to the cell outer membrane. Part of the outer membrane protein assembly complex, which is involved in assembly and insertion of beta-barrel proteins into the outer membrane. In Shigella dysenteriae serotype 1 (strain Sd197), this protein is Outer membrane protein assembly factor BamB.